The primary structure comprises 263 residues: Lens fiber major intrinsic protein (263 aa).

Residues 1–9 are Cytoplasmic-facing; that stretch reads MWELRSASF. A helical transmembrane segment spans residues 10–29; it reads WRAIFAEFFATLFYVFFGLG. Over 30 to 41 the chain is Extracellular; that stretch reads ASLRWAPGPLHV. A helical transmembrane segment spans residues 42 to 59; the sequence is LQVALAFGLALATLVQAV. At 60–61 the chain is on the cytoplasmic side; the sequence is GH. Residues 62 to 77 constitute an intramembrane region (discontinuously helical); sequence ISGAHVNPAVTFAFLV. The NPA 1 signature appears at 68–70; that stretch reads NPA. The Cytoplasmic segment spans residues 78 to 82; the sequence is GSQMS. Residues 83 to 106 traverse the membrane as a helical segment; it reads LLRAICYMAAQLLGAVAGAAVLYS. Residues 107–127 are Extracellular-facing; sequence VTPAAVRGNLALNTLHPGVSL. A helical membrane pass occupies residues 128–148; that stretch reads GQATTVEIFLTLQFVLCIFAT. Residues 149–156 are Cytoplasmic-facing; the sequence is YDERRNGR. Residues 157-175 traverse the membrane as a helical segment; sequence LGSVALAVGFSLTLGHLFG. The Extracellular segment spans residues 176-178; sequence MYY. Residues 179–193 constitute an intramembrane region (discontinuously helical); sequence TGAGMNPARSFAPAI. The NPA 2 motif lies at 184–186; sequence NPA. Residues 194-200 lie on the Extracellular side of the membrane; the sequence is LTRNFTN. Residues 201-222 form a helical membrane-spanning segment; sequence HWVYWVGPIIGGGLASLLYDFL. Topologically, residues 223-263 are cytoplasmic; it reads LFPRLKSVSERLSILKGARPSDSNGQPEGTGEPVELKTQAL. The interval 227 to 237 is interaction with CALM; that stretch reads LKSVSERLSIL. 3 positions are modified to phosphoserine: serine 235, serine 243, and serine 245. The tract at residues 240 to 263 is disordered; that stretch reads ARPSDSNGQPEGTGEPVELKTQAL. Asparagine 246 carries the post-translational modification Deamidated asparagine.

This sequence belongs to the MIP/aquaporin (TC 1.A.8) family. As to quaternary structure, homotetramer; each monomer provides an independent water pore. Two homotetramers on opposing membranes can dimerize, forming a cell-cell junction. Interacts with CALM; the calcium-calmodulin/CALM complex interacts with the cytoplasmic domains of two aquaporins, leading to channel closure. Interacts with BFSP1 (via C-terminus); prevents calcium-dependent inhibition of the water channel activity. Subject to partial proteolytic cleavage in the eye lens core. Partial proteolysis promotes interactions between tetramers from adjoining membranes. In terms of processing, fatty acylated at Met-1 and Lys-238. The acyl modifications, in decreasing order of ion abundance, are: oleoyl (C18:1) &gt; palmitoyl (C16:0) &gt; stearoyl (C18:0) &gt; eicosenoyl (C20:1) &gt; dihomo-gamma-linolenoyl (C20:3) &gt; palmitoleoyl (C16:1) &gt; eicosadienoyl (C20:2).

The protein resides in the cell membrane. The protein localises to the cell junction. It catalyses the reaction H2O(in) = H2O(out). The water channel activity is inhibited by calcium through calmodulin/CALM. Its function is as follows. Aquaporins form homotetrameric transmembrane channels, with each monomer independently mediating water transport across the plasma membrane along its osmotic gradient. Specifically expressed in lens fiber cells, this aquaporin is crucial for maintaining lens water homeostasis and transparency. Beyond water permeability, it also acts as a cell-to-cell adhesion molecule, forming thin junctions between lens fiber cells that are essential for maintaining the ordered structure and transparency of the lens. The protein is Lens fiber major intrinsic protein of Oryctolagus cuniculus (Rabbit).